Here is a 436-residue protein sequence, read N- to C-terminus: 3-ketoacyl-CoA thiolase (436 aa).

C99 functions as the Acyl-thioester intermediate in the catalytic mechanism. Catalysis depends on proton acceptor residues H392 and C422.

The protein belongs to the thiolase-like superfamily. Thiolase family. Heterotetramer of two alpha chains (FadJ) and two beta chains (FadI).

It localises to the cytoplasm. The catalysed reaction is an acyl-CoA + acetyl-CoA = a 3-oxoacyl-CoA + CoA. It functions in the pathway lipid metabolism; fatty acid beta-oxidation. Its function is as follows. Catalyzes the final step of fatty acid oxidation in which acetyl-CoA is released and the CoA ester of a fatty acid two carbons shorter is formed. The chain is 3-ketoacyl-CoA thiolase from Shigella dysenteriae serotype 1 (strain Sd197).